The following is a 196-amino-acid chain: ATP-dependent Clp protease proteolytic subunit (196 aa).

Catalysis depends on S98, which acts as the Nucleophile. The active site involves H123.

The protein belongs to the peptidase S14 family. In terms of assembly, fourteen ClpP subunits assemble into 2 heptameric rings which stack back to back to give a disk-like structure with a central cavity, resembling the structure of eukaryotic proteasomes.

It is found in the cytoplasm. It catalyses the reaction Hydrolysis of proteins to small peptides in the presence of ATP and magnesium. alpha-casein is the usual test substrate. In the absence of ATP, only oligopeptides shorter than five residues are hydrolyzed (such as succinyl-Leu-Tyr-|-NHMec, and Leu-Tyr-Leu-|-Tyr-Trp, in which cleavage of the -Tyr-|-Leu- and -Tyr-|-Trp bonds also occurs).. Functionally, cleaves peptides in various proteins in a process that requires ATP hydrolysis. Has a chymotrypsin-like activity. Plays a major role in the degradation of misfolded proteins. The chain is ATP-dependent Clp protease proteolytic subunit from Acidobacterium capsulatum (strain ATCC 51196 / DSM 11244 / BCRC 80197 / JCM 7670 / NBRC 15755 / NCIMB 13165 / 161).